Here is a 1023-residue protein sequence, read N- to C-terminus: Exportin-T (1023 aa).

Belongs to the exportin family.

The protein resides in the nucleus. Its subcellular location is the cytoplasm. Its function is as follows. tRNA nucleus export receptor which facilitates tRNA translocation across the nuclear pore complex. Involved in pre-tRNA splicing, probably by affecting the interaction of pre-tRNA with splicing endonuclease. This Botryotinia fuckeliana (strain B05.10) (Noble rot fungus) protein is Exportin-T (los1).